The following is a 351-amino-acid chain: Transmembrane protein 184 homolog DDB_G0279555 (351 aa).

The chain crosses the membrane as a helical span at residues 1 to 21 (MWIVAGVCSGVAILLSFYLIY). The N-linked (GlcNAc...) asparagine glycan is linked to Asn26. 5 helical membrane passes run 39–59 (ILIMVPIYSVDSWLSLRFVEL), 73–93 (YVLYCFFSLIVAYIERDFDLV), 127–147 (FVLQFVFIKPIVAIISLVLET), 162–182 (YVWLTVVENISVGLSLYFLVL), and 206–226 (ILFFSFWQSIAISFLVYFGVI). N-linked (GlcNAc...) asparagine glycosylation occurs at Asn236. Residues 241 to 261 (LQDFITCVEMVILAICHHFFF) form a helical membrane-spanning segment. N-linked (GlcNAc...) asparagine glycans are attached at residues Asn301 and Asn304. The interval 327–351 (HNHPTTKKKDEESNLLEPEDKDIII) is disordered. Residues 339 to 351 (SNLLEPEDKDIII) show a composition bias toward acidic residues.

The protein belongs to the TMEM184 family.

The protein resides in the cell membrane. Its function is as follows. Probable transporter. This Dictyostelium discoideum (Social amoeba) protein is Transmembrane protein 184 homolog DDB_G0279555 (tmem184C).